A 346-amino-acid polypeptide reads, in one-letter code: Putative transmembrane protein ORF346 (346 aa).

Transmembrane regions (helical) follow at residues 67–87 (LPII…CIVY), 104–124 (IINP…VGLT), 134–154 (PPYL…SGIY), 156–176 (AIGD…GLFI), 181–201 (IILY…LCLS), and 219–241 (YPFS…LGSY). The disordered stretch occupies residues 294-346 (SEYPHSENGSGGSGGSGSGSGSGGSGSGGNSGSGGSGSGSSGSGGNSGSGNNG). Over residues 302 to 346 (GSGGSGGSGSGSGSGGSGSGGNSGSGGSGSGSSGSGGNSGSGNNG) the composition is skewed to gly residues.

The protein localises to the host membrane. This Acidianus bottle-shaped virus (isolate Italy/Pozzuoli) (ABV) protein is Putative transmembrane protein ORF346.